A 189-amino-acid polypeptide reads, in one-letter code: Ribosome hibernation promotion factor (189 aa).

Belongs to the HPF/YfiA ribosome-associated protein family. Long HPF subfamily. In terms of assembly, interacts with 100S ribosomes.

It is found in the cytoplasm. In terms of biological role, required for dimerization of active 70S ribosomes into 100S ribosomes in stationary phase; 100S ribosomes are translationally inactive and sometimes present during exponential growth. The protein is Ribosome hibernation promotion factor of Staphylococcus epidermidis (strain ATCC 35984 / DSM 28319 / BCRC 17069 / CCUG 31568 / BM 3577 / RP62A).